The sequence spans 181 residues: Large ribosomal subunit protein uL16 (181 aa).

The protein belongs to the universal ribosomal protein uL16 family. As to quaternary structure, part of the 50S ribosomal subunit.

The protein is Large ribosomal subunit protein uL16 of Pyrococcus furiosus (strain ATCC 43587 / DSM 3638 / JCM 8422 / Vc1).